Here is an 826-residue protein sequence, read N- to C-terminus: E3 ubiquitin ligase PARAQUAT TOLERANCE 3 (826 aa).

One can recognise a DWNN domain in the interval 3–76 (IYYKFKSARD…NTSVLIRRVP (74 aa)). Residues 203–216 (CHRCNVSGHFIQHC) form a CCHC-type zinc finger. Ser-278 carries the phosphoserine modification. Residues 288-326 (CPLCKEVMRDAALASKCCLKSYCDKCIRDHIIAKSMCVC) form an RING-type; degenerate zinc finger. Composition is skewed to polar residues over residues 356–365 (SAENAGSMCQ), 396–406 (PSNNNETSTLK), and 435–454 (NIQG…NTQP). Disordered regions lie at residues 356 to 406 (SAEN…STLK), 435 to 488 (NIQG…GPDY), and 585 to 826 (HPIM…RARA). Ser-397 carries the post-translational modification Phosphoserine. The segment covering 588–624 (MGREEFEAKKTEMKRKRENEIRRSEGGNVVRDSEKSR) has biased composition (basic and acidic residues). Positions 625–635 (IMNNSAVTSSP) are enriched in polar residues. The span at 651-667 (DYDRRRRSDRSSPERQS) shows a compositional bias: basic and acidic residues. 2 short sequence motifs (nuclear localization signal) span residues 668–675 (SRRFTSPP) and 695–702 (DRRRDRPR). Residues 680–706 (RKSERDRHHDLDSEHDRRRDRPRETDR) are compositionally biased toward basic and acidic residues. Basic residues predominate over residues 790-799 (FKRKPSRYKR). Ser-800 carries the phosphoserine modification. Over residues 809–826 (GDEHFRHSKRSKGERARA) the composition is skewed to basic and acidic residues.

As to quaternary structure, interacts with PRMT13/PRMT4B in the nucleus. In terms of tissue distribution, expressed constitutively in both shoot and root tissues.

Its subcellular location is the nucleus. It carries out the reaction S-ubiquitinyl-[E2 ubiquitin-conjugating enzyme]-L-cysteine + [acceptor protein]-L-lysine = [E2 ubiquitin-conjugating enzyme]-L-cysteine + N(6)-ubiquitinyl-[acceptor protein]-L-lysine.. In terms of biological role, E3 ubiquitin ligase acting as a negative regulator of oxidative stress tolerance, probably by mediating 26S proteasome-mediated degradation of PRMT13/PRMT4B, thus preventing APX1 and GPX1 accumulation via the reduction of histone H3 methylation (H3R17me2a). Confers sensitivity to cadmium CdCl(2) and salt NaCl stresses. This chain is E3 ubiquitin ligase PARAQUAT TOLERANCE 3, found in Arabidopsis thaliana (Mouse-ear cress).